The following is a 294-amino-acid chain: MPRGDSEQVRYCARFSYLWLKFSLIIYSTVFWLIGALVLSVGIYAEVERQKYKTLESAFLAPAIILILLGVVMFMVSFIGVLASLRDNLYLLQAFMYILGICLIMELIGGVVALTFRNQTIDFLNDNIRRGIENYYDDLDFKNIMDFVQKKFKCCGGEDYRDWSKNQYHDCSAPGPLACGVPYTCCIRNTTEVVNTMCGYKTIDKERFSVQDVIYVRGCTNAVIIWFMDNYTIMAGILLGILLPQFLGVLLTLLYITRVEDIIMEHSVTDGLLGPGAKPSVEAAGTGCCLCYPN.

The Cytoplasmic portion of the chain corresponds to 1–23 (MPRGDSEQVRYCARFSYLWLKFS). A helical membrane pass occupies residues 24-44 (LIIYSTVFWLIGALVLSVGIY). Over 45–62 (AEVERQKYKTLESAFLAP) the chain is Extracellular. A helical transmembrane segment spans residues 63–83 (AIILILLGVVMFMVSFIGVLA). At 84–93 (SLRDNLYLLQ) the chain is on the cytoplasmic side. The chain crosses the membrane as a helical span at residues 94-114 (AFMYILGICLIMELIGGVVAL). Over 115–235 (TFRNQTIDFL…WFMDNYTIMA (121 aa)) the chain is Extracellular. A glycan (N-linked (GlcNAc...) asparagine) is linked at Asn118. 4 disulfide bridges follow: Cys154-Cys219, Cys155-Cys185, Cys171-Cys179, and Cys186-Cys198. N-linked (GlcNAc...) asparagine glycosylation is found at Asn189 and Asn230. Residues 236–256 (GILLGILLPQFLGVLLTLLYI) traverse the membrane as a helical segment. At 257–294 (TRVEDIIMEHSVTDGLLGPGAKPSVEAAGTGCCLCYPN) the chain is on the cytoplasmic side.

It belongs to the tetraspanin (TM4SF) family. As to quaternary structure, interacts with ADAM10; the interaction influences ADAM10 substrate specificity, endocytosis and turnover. Palmitoylated.

The protein localises to the cell membrane. Its subcellular location is the late endosome membrane. Part of TspanC8 subgroup, composed of 6 members that interact with the transmembrane metalloprotease ADAM10. This interaction is required for ADAM10 exit from the endoplasmic reticulum and for enzymatic maturation and trafficking to the cell surface as well as substrate specificity. Different TspanC8/ADAM10 complexes have distinct substrates. Promotes ADAM10-mediated cleavage of CDH2. Negatively regulates ligand-induced Notch activity probably by regulating ADAM10 activity. The polypeptide is Tetraspanin-15 (Homo sapiens (Human)).